Reading from the N-terminus, the 127-residue chain is Flagellar assembly factor FliW (127 aa).

It belongs to the FliW family. Interacts with translational regulator CsrA and flagellin(s).

The protein localises to the cytoplasm. Functionally, acts as an anti-CsrA protein, binds CsrA and prevents it from repressing translation of its target genes, one of which is flagellin. Binds to flagellin and participates in the assembly of the flagellum. The sequence is that of Flagellar assembly factor FliW from Campylobacter concisus (strain 13826).